The sequence spans 644 residues: DNA mismatch repair protein MutL (644 aa).

Disordered regions lie at residues 338–390 and 416–445; these read RPNA…ERPA and QPQE…DDTQ. Low complexity-rich tracts occupy residues 349 to 366 and 416 to 427; these read EATP…EASA and QPQEAAEEAAGT.

Belongs to the DNA mismatch repair MutL/HexB family.

This protein is involved in the repair of mismatches in DNA. It is required for dam-dependent methyl-directed DNA mismatch repair. May act as a 'molecular matchmaker', a protein that promotes the formation of a stable complex between two or more DNA-binding proteins in an ATP-dependent manner without itself being part of a final effector complex. The sequence is that of DNA mismatch repair protein MutL from Chromohalobacter salexigens (strain ATCC BAA-138 / DSM 3043 / CIP 106854 / NCIMB 13768 / 1H11).